The following is a 235-amino-acid chain: V-type proton ATPase subunit E2 (235 aa).

M1 is subject to N-acetylmethionine. A coiled-coil region spans residues 8–64 (KQIQQMVRFIRQEAEEKANEISISAEEEFNIERLQLLESAKRKLRQDYDRKLKQVDI).

Belongs to the V-ATPase E subunit family. V-ATPase is a heteromultimeric enzyme composed of a peripheral catalytic V1 complex (components A to H) attached to an integral membrane V0 proton pore complex (components: a, c, c'', d and e).

It is found in the vacuole membrane. Functionally, subunit of the peripheral V1 complex of vacuolar ATPase essential for assembly or catalytic function. V-ATPase is responsible for acidifying a variety of intracellular compartments in eukaryotic cells. This Arabidopsis thaliana (Mouse-ear cress) protein is V-type proton ATPase subunit E2 (VHA-E2).